The chain runs to 262 residues: Kallikrein-1 (262 aa).

A signal peptide spans 1-18 (MWFLVLCLALSLGGTGAA). The propeptide at 19-24 (PPIQSR) is activation peptide. Residues 25 to 259 (IVGGWECEQH…YVKWIEDTIA (235 aa)) enclose the Peptidase S1 domain. 5 disulfides stabilise this stretch: cysteine 31-cysteine 174, cysteine 50-cysteine 66, cysteine 153-cysteine 220, cysteine 185-cysteine 199, and cysteine 210-cysteine 235. The active-site Charge relay system is histidine 65. A glycan (O-linked (GalNAc...) serine) is linked at serine 93. N-linked (GlcNAc...) asparagine glycosylation is present at asparagine 102. The O-linked (GalNAc...) serine glycan is linked to serine 104. A glycan (N-linked (GlcNAc...) asparagine) is linked at asparagine 108. Aspartate 120 acts as the Charge relay system in catalysis. N-linked (GlcNAc...) asparagine; partial glycosylation occurs at asparagine 165. An O-linked (GalNAc...) serine glycan is attached at serine 167. Catalysis depends on serine 214, which acts as the Charge relay system.

It belongs to the peptidase S1 family. Kallikrein subfamily. The O-linked polysaccharides on Ser-93, Ser-104 and Ser-167 are probably the mucin type linked to GalNAc. In PubMed:3163150, GalNAc was detected with the corresponding peptides but not located. As to expression, isoform 2 is expressed in pancreas, salivary glands, kidney, colon, prostate gland, testis, spleen and the colon adenocarcinoma cell line T84.

The catalysed reaction is Preferential cleavage of Arg-|-Xaa bonds in small molecule substrates. Highly selective action to release kallidin (lysyl-bradykinin) from kininogen involves hydrolysis of Met-|-Xaa or Leu-|-Xaa.. In terms of biological role, glandular kallikreins cleave Met-Lys and Arg-Ser bonds in kininogen to release Lys-bradykinin. Functionally, (Microbial infection) Cleaves Neisseria meningitidis NHBA in saliva; Neisseria is an obligate commensal of the nasopharyngeal mucosa. This chain is Kallikrein-1 (KLK1), found in Homo sapiens (Human).